The sequence spans 126 residues: Small ribosomal subunit protein uS11 (126 aa).

The protein belongs to the universal ribosomal protein uS11 family. In terms of assembly, part of the 30S ribosomal subunit.

In terms of biological role, located on the platform of the 30S subunit. The sequence is that of Small ribosomal subunit protein uS11 from Methanosarcina mazei (strain ATCC BAA-159 / DSM 3647 / Goe1 / Go1 / JCM 11833 / OCM 88) (Methanosarcina frisia).